A 357-amino-acid polypeptide reads, in one-letter code: Alanine racemase (357 aa).

Residue Lys35 is the Proton acceptor; specific for D-alanine of the active site. The residue at position 35 (Lys35) is an N6-(pyridoxal phosphate)lysine. A substrate-binding site is contributed by Arg131. Residue Tyr256 is the Proton acceptor; specific for L-alanine of the active site. Met304 lines the substrate pocket.

The protein belongs to the alanine racemase family. The cofactor is pyridoxal 5'-phosphate.

It carries out the reaction L-alanine = D-alanine. It functions in the pathway amino-acid biosynthesis; D-alanine biosynthesis; D-alanine from L-alanine: step 1/1. In terms of biological role, catalyzes the interconversion of L-alanine and D-alanine. May also act on other amino acids. The sequence is that of Alanine racemase (alr) from Legionella pneumophila (strain Lens).